The chain runs to 355 residues: Proto-oncogene Wnt-3 (355 aa).

The N-terminal stretch at 1-21 is a signal peptide; the sequence is MEPHLLGLLLGLLLSGTRVLA. Cystine bridges form between Cys-80–Cys-91, Cys-131–Cys-139, Cys-141–Cys-158, Cys-206–Cys-220, Cys-208–Cys-215, Cys-284–Cys-315, Cys-300–Cys-310, Cys-314–Cys-354, Cys-330–Cys-345, Cys-332–Cys-342, and Cys-337–Cys-338. Asn-90 carries N-linked (GlcNAc...) asparagine glycosylation. A lipid anchor (O-palmitoleoyl serine; by PORCN) is attached at Ser-212. A glycan (N-linked (GlcNAc...) asparagine) is linked at Asn-301.

Belongs to the Wnt family. In terms of assembly, forms a soluble 1:1 complex with AFM; this prevents oligomerization and is required for prolonged biological activity. The complex with AFM may represent the physiological form in body fluids. Interacts with PORCN. Interacts with WLS. Palmitoleoylation is required for efficient binding to frizzled receptors. Depalmitoleoylation leads to Wnt signaling pathway inhibition. Detected at low levels in adult brain. Dorsal portion of the neural tube, dorsal ectoderm, the branchial arches, and the limb buds.

It is found in the secreted. Its subcellular location is the extracellular space. It localises to the extracellular matrix. Its function is as follows. Ligand for members of the frizzled family of seven transmembrane receptors. Functions in the canonical Wnt signaling pathway that results in activation of transcription factors of the TCF/LEF family. Required for normal gastrulation, formation of the primitive streak, and for the formation of the mesoderm during early embryogenesis. Required for normal formation of the apical ectodermal ridge and for normal embryonic limb development. The sequence is that of Proto-oncogene Wnt-3 (Wnt3) from Mus musculus (Mouse).